A 436-amino-acid polypeptide reads, in one-letter code: Gamma-glutamyl phosphate reductase (436 aa).

It belongs to the gamma-glutamyl phosphate reductase family.

Its subcellular location is the cytoplasm. The enzyme catalyses L-glutamate 5-semialdehyde + phosphate + NADP(+) = L-glutamyl 5-phosphate + NADPH + H(+). It participates in amino-acid biosynthesis; L-proline biosynthesis; L-glutamate 5-semialdehyde from L-glutamate: step 2/2. In terms of biological role, catalyzes the NADPH-dependent reduction of L-glutamate 5-phosphate into L-glutamate 5-semialdehyde and phosphate. The product spontaneously undergoes cyclization to form 1-pyrroline-5-carboxylate. The sequence is that of Gamma-glutamyl phosphate reductase from Prochlorococcus marinus (strain MIT 9215).